The following is a 355-amino-acid chain: Cyclic nucleotide-gated potassium channel RHE_CH03180 (355 aa).

The Cytoplasmic portion of the chain corresponds to 1 to 12; that stretch reads MSAVPFSKISTP. A helical membrane pass occupies residues 13-30; the sequence is LNALFATIGLLVVAALTT. Over 31–38 the chain is Periplasmic; the sequence is QGLTGQER. Residues 39–61 form a helical membrane-spanning segment; sequence LVFELLLAAIWLAYVLQLSGTLL. The Cytoplasmic segment spans residues 62-73; it reads SRRRRLSGEMTA. The chain crosses the membrane as a helical span at residues 74–93; sequence LVIDLLAVLVPAAAFLFVGS. A helical membrane pass occupies residues 94-111; it reads RDRDLYCAIWLLKPLRDS. Residues 112 to 128 lie on the Cytoplasmic side of the membrane; sequence TFFRLLAKVVANESRNL. Residues 129 to 149 traverse the membrane as a helical segment; the sequence is LGVTSVFGIVLFGAALAGYII. Over 150–160 the chain is Periplasmic; that stretch reads ERDVQPDKFGS. An intramembrane region (pore-forming) is located at residues 161–179; it reads IPQAMWWAVVTLSTTGYGD. The Selectivity filter signature appears at 174 to 179; it reads TTGYGD. The Periplasmic segment spans residues 180 to 184; that stretch reads EIPQS. Residues 185–209 form a helical membrane-spanning segment; that stretch reads LAGRVLAGLVMMSGIGIFALWAGIL. The Cytoplasmic segment spans residues 210 to 355; sequence ATGFYEEVRR…LERRGGPPKE (146 aa). 3',5'-cyclic AMP contacts are provided by residues 297–298, 307–308, and Arg348; these read GE and RS.

It belongs to the potassium channel family. Homotetramer.

It is found in the cell membrane. Functionally, cyclic nucleotide-regulated potassium channel activated by cAMP. This is Cyclic nucleotide-gated potassium channel RHE_CH03180 from Rhizobium etli (strain ATCC 51251 / DSM 11541 / JCM 21823 / NBRC 15573 / CFN 42).